The chain runs to 129 residues: Glycine cleavage system H protein (129 aa).

A Lipoyl-binding domain is found at 24–106 (LLKIGVSEFA…IGEGWLVILK (83 aa)). N6-lipoyllysine is present on Lys-65.

This sequence belongs to the GcvH family. As to quaternary structure, the glycine cleavage system is composed of four proteins: P, T, L and H. It depends on (R)-lipoate as a cofactor.

In terms of biological role, the glycine cleavage system catalyzes the degradation of glycine. The H protein shuttles the methylamine group of glycine from the P protein to the T protein. This chain is Glycine cleavage system H protein, found in Prochlorococcus marinus (strain AS9601).